A 329-amino-acid chain; its full sequence is Biotin synthase (329 aa).

Residues 46-275 (FFGRRLKLVR…LNPKAELRAS (230 aa)) form the Radical SAM core domain. Residues Cys-64, Cys-68, and Cys-71 each coordinate [4Fe-4S] cluster. 4 residues coordinate [2Fe-2S] cluster: Cys-108, Cys-140, Cys-200, and Arg-273.

This sequence belongs to the radical SAM superfamily. Biotin synthase family. As to quaternary structure, homodimer. [4Fe-4S] cluster serves as cofactor. [2Fe-2S] cluster is required as a cofactor.

It carries out the reaction (4R,5S)-dethiobiotin + (sulfur carrier)-SH + 2 reduced [2Fe-2S]-[ferredoxin] + 2 S-adenosyl-L-methionine = (sulfur carrier)-H + biotin + 2 5'-deoxyadenosine + 2 L-methionine + 2 oxidized [2Fe-2S]-[ferredoxin]. It functions in the pathway cofactor biosynthesis; biotin biosynthesis; biotin from 7,8-diaminononanoate: step 2/2. In terms of biological role, catalyzes the conversion of dethiobiotin (DTB) to biotin by the insertion of a sulfur atom into dethiobiotin via a radical-based mechanism. The polypeptide is Biotin synthase (Thermus thermophilus (strain ATCC BAA-163 / DSM 7039 / HB27)).